A 647-amino-acid chain; its full sequence is Zinc finger CCCH domain-containing protein 19 (647 aa).

C3H1-type zinc fingers lie at residues 16-45 and 47-73; these read RRRSTDCIYFLASPLTCKKGSECEYRHSDA and RMNPRDCWYWFNGNCANPKCSFRHPPL. The segment at 78-106 is disordered; sequence GAPTTPRTSQQSAPQVSVPAQAPVPNPAS. Residues 86-106 show a composition bias toward low complexity; it reads SQQSAPQVSVPAQAPVPNPAS. The C3H1-type 3 zinc finger occupies 109–136; it reads AKQGVPCYYFQKGMCVKGDRCAFLHLPQ. Disordered regions lie at residues 155–280, 308–327, 335–452, 512–580, and 586–605; these read VPHP…RTNG, LSESRFSQREPMPLTADSSD, QRRL…DAES, LKRK…LSPA, and EAADDASRELEEQQDVETAE. Composition is skewed to polar residues over residues 160–175 and 189–203; these read LKNSWTKPNSSAQQNA and NGKTAQKQNLTNRAG. The segment covering 267 to 280 has biased composition (basic and acidic residues); that stretch reads SLREDRGAYRRTNG. The span at 347 to 359 shows a compositional bias: basic and acidic residues; the sequence is SDRHNVYPEDERH. Residues 369–379 are compositionally biased toward polar residues; it reads QASNDGVSSSR. A compositionally biased stretch (basic and acidic residues) spans 419–433; the sequence is LRGKLHDRLKAKPNE. The segment covering 435–445 has biased composition (polar residues); the sequence is VSGNVQSSLSK. Residues 527-536 show a composition bias toward basic and acidic residues; that stretch reads GSKREEHSGG.

This Oryza sativa subsp. japonica (Rice) protein is Zinc finger CCCH domain-containing protein 19.